The primary structure comprises 198 residues: Crinkler effector protein BLC01 (198 aa).

Positions 1–15 are cleaved as a signal peptide; that stretch reads MMVKLICAIVDIAGA. An LQLFLAK domain region spans residues 16–55; the sequence is AFPIDIDTNELVGDFKKVIKAENSRTIACDANDLRLFLAK. The segment at 56–113 is DWL domain; that stretch reads TDGRWLTEFEVQNGVADISVFEELDVVGAPLNMIGLSEETVSSVAITKELVKAKKTPL. Positions 114–119 match the HVLVXXP motif motif; it reads HVLVVP.

This sequence belongs to the Crinkler effector family.

It localises to the secreted. Its subcellular location is the host cell. In terms of biological role, secreted effector that elicits necrosis in host plants, a characteristic of plant innate immunity. The chain is Crinkler effector protein BLC01 from Bremia lactucae (Lettuce downy mildew).